Here is a 1361-residue protein sequence, read N- to C-terminus: MWGGGKMAVVSLSPHTAKMRKLFGQASTTMAYDGLKREAERRTRSDHNITMVAKDDELYLYHLTLKKQTNFVHSCIGHFVDLEAGSKREQSQLCVATETHLELYDTADGELKLIAKFQNLFATITSMKSLDLPHSGSRAKASNWPTFLALTSDSGNLSIVQIIMHAGALRLKTLVNQPLTRTTLRRVSPISYMEIDPNGRCIILSSVEQNKLCFLVDYAQKLRISSPLEIIRPHMVTLDMAVVDVNFNNPCFVTLEIDNAATQLSVHLIFYVLELGLNHIVKKADYLVNPSANFVLSLPDLSRYNITTSLSDNNYDADYDTLFNPFVVIGFENHILVKDMNGFFSLKVEIPKRSITNSRHKNVTIISGIVQKLKNDFFVLLQSNHGDLFKLTVSPDTNDRNRPLVQLSYFDTIQNSHQLHIFKNGYLFALSEMNNNFLFQFEKLGVEKNDFSNVLTSKDPNKSLVFEPSIKLQNLSILSQQLNLNPSIKSQIVSDSPLSIATKHFTNNKIITLTNAVNYSNLISTSLPPNATKLWLIPDPATTGDNNTLLFITFPKKTMILQIDNESMEELTPDEATRSAFKLSQDTTIHTCLMGSHSIIQVCTAELRHIVPTGKSRYSNKLTWVPPAGIRIVCATSSKTQLIISLSNYELVYFKIDVSSDSLIELTTHPELDTMPSKVAIVQDTQHADLLAIADNEGMIKIMSLKDQKEDFLTVISLQLVSEKISDMIMVRDSSIGQLNLHVGLENGVYMKFHIGDVDGSFTDIKRRFLGLKPVSLSYLREISVSLNNEEEEEEEEDDDDEKEEEEINSSGAKWMSCVVCHSSSTWVSYTWKNVWTIRQLKDQNMLSCSKFVNADVAINGVCSISSSGRLNIGRVSNFPTLDNWFHVHESSVNKQENGGGDESNEEEEDEMEEEMEMLQISTFRPRTILSFPNNPKSILFIDNHSGKKQCRISLQIDGECLKFGSSDHLYKILDDIDCVSAAIIDFTRQADHLIICAGDKRLLTYKILVNKDKLSFDIELLHQTEIISPIHAMLKFKNFLLTAMGSTIVLYGLGKKQLLRRSVTQTPVSITKIVSMHQWNYERLAVGDIHESVTLFIWDPAGNVFIPYVDDSVKRHVTVLKFLDEATVIGADRYGNAWTLRSPPECEKIMSNHDPSELSNGAIKYPLDVITLQQKLPNTYDCKFKFQLLNHFFVNDIITDFHILDSLSNSDRPGCIYMGLQGTVGCFIPLLSKGNVFMMGNIENIMAEADDTFYLDYESRKKNNNMRKEDDEEESGSVVLQGRHGIEDEIICEGSCSILGRDHQEYRSYYAPVRKVIDGDLCENFLRLSLNEQEFLAKNLKSVQVEDIIQTINEVRTNYM.

Disordered regions lie at residues 788–811 and 893–912; these read NNEE…INSS and VNKQ…EDEM. Acidic residues-rich tracts occupy residues 789 to 808 and 903 to 912; these read NEEE…EEEI and ESNEEEEDEM.

This sequence belongs to the RSE1 family. In terms of assembly, belongs to the SF3B complex, a U2 associated sub-complex of the spliceosome. The SF3B complex is composed of at least CUS1, HSH49, HSH155, RDS3 and RSE1. Also belongs to the CWC complex (or CEF1-associated complex), a spliceosome sub-complex reminiscent of a late-stage spliceosome composed of the U2, U5 and U6 snRNAs and at least BUD13, BUD31, BRR2, CDC40, CEF1, CLF1, CUS1, CWC2, CWC15, CWC21, CWC22, CWC23, CWC24, CWC25, CWC27, ECM2, HSH155, IST3, ISY1, LEA1, MSL1, NTC20, PRP8, PRP9, PRP11, PRP19, PRP21, PRP22, PRP45, PRP46, SLU7, SMB1, SMD1, SMD2, SMD3, SMX2, SMX3, SNT309, SNU114, SPP2, SYF1, SYF2, RSE1 and YJU2. Interacts with RDS3.

The protein localises to the nucleus. Its function is as follows. Involved in G2/M transition. Required for pre-mRNA splicing and endoplasmic reticulum (ER) to Golgi secretion pathway. U2 snRNPs associated protein required for the pre-spliceosome assembly. The involvement in ER to Golgi secretion is probably indirect and due to the splicing of the pre-mRNA coding for SAR1, a small GTP-binding protein required for COPII vesicle formation from the ER. The protein is Pre-mRNA-splicing factor RSE1 (RSE1) of Saccharomyces cerevisiae (strain ATCC 204508 / S288c) (Baker's yeast).